Reading from the N-terminus, the 369-residue chain is tRNA 2-selenouridine synthase (369 aa).

The Rhodanese domain occupies 12–136; sequence FLEDTPLMDV…LRNFLFETTR (125 aa). Cys95 (S-selanylcysteine intermediate) is an active-site residue.

The protein belongs to the SelU family. Monomer.

The catalysed reaction is 5-methylaminomethyl-2-thiouridine(34) in tRNA + selenophosphate + (2E)-geranyl diphosphate + H2O + H(+) = 5-methylaminomethyl-2-selenouridine(34) in tRNA + (2E)-thiogeraniol + phosphate + diphosphate. It carries out the reaction 5-methylaminomethyl-2-thiouridine(34) in tRNA + (2E)-geranyl diphosphate = 5-methylaminomethyl-S-(2E)-geranyl-thiouridine(34) in tRNA + diphosphate. The enzyme catalyses 5-methylaminomethyl-S-(2E)-geranyl-thiouridine(34) in tRNA + selenophosphate + H(+) = 5-methylaminomethyl-2-(Se-phospho)selenouridine(34) in tRNA + (2E)-thiogeraniol. It catalyses the reaction 5-methylaminomethyl-2-(Se-phospho)selenouridine(34) in tRNA + H2O = 5-methylaminomethyl-2-selenouridine(34) in tRNA + phosphate. Its function is as follows. Involved in the post-transcriptional modification of the uridine at the wobble position (U34) of tRNA(Lys), tRNA(Glu) and tRNA(Gln). Catalyzes the conversion of 2-thiouridine (S2U-RNA) to 2-selenouridine (Se2U-RNA). Acts in a two-step process involving geranylation of 2-thiouridine (S2U) to S-geranyl-2-thiouridine (geS2U) and subsequent selenation of the latter derivative to 2-selenouridine (Se2U) in the tRNA chain. This Pseudomonas paraeruginosa (strain DSM 24068 / PA7) (Pseudomonas aeruginosa (strain PA7)) protein is tRNA 2-selenouridine synthase.